The sequence spans 273 residues: Large ribosomal subunit protein uL2 (273 aa).

Positions 228–273 (VDHPHGGGEGKTSGGRHPVTPWGFPTKGKKTRKNKRTSKFIVKKRK) are disordered. Residues 254-273 (KGKKTRKNKRTSKFIVKKRK) are compositionally biased toward basic residues.

It belongs to the universal ribosomal protein uL2 family. As to quaternary structure, part of the 50S ribosomal subunit. Forms a bridge to the 30S subunit in the 70S ribosome.

Its function is as follows. One of the primary rRNA binding proteins. Required for association of the 30S and 50S subunits to form the 70S ribosome, for tRNA binding and peptide bond formation. It has been suggested to have peptidyltransferase activity; this is somewhat controversial. Makes several contacts with the 16S rRNA in the 70S ribosome. The protein is Large ribosomal subunit protein uL2 of Rickettsia massiliae (strain Mtu5).